The chain runs to 713 residues: Ribosomal RNA large subunit methyltransferase K/L (713 aa).

The 112-residue stretch at 43-154 folds into the THUMP domain; that stretch reads LLYRALLWSR…RDQVMLSLDL (112 aa).

The protein belongs to the methyltransferase superfamily. RlmKL family.

The protein localises to the cytoplasm. The enzyme catalyses guanosine(2445) in 23S rRNA + S-adenosyl-L-methionine = N(2)-methylguanosine(2445) in 23S rRNA + S-adenosyl-L-homocysteine + H(+). It carries out the reaction guanosine(2069) in 23S rRNA + S-adenosyl-L-methionine = N(2)-methylguanosine(2069) in 23S rRNA + S-adenosyl-L-homocysteine + H(+). Functionally, specifically methylates the guanine in position 2445 (m2G2445) and the guanine in position 2069 (m7G2069) of 23S rRNA. The polypeptide is Ribosomal RNA large subunit methyltransferase K/L (Sodalis glossinidius (strain morsitans)).